Reading from the N-terminus, the 311-residue chain is Pyrimidine-specific ribonucleoside hydrolase RihA (311 aa).

His240 is a catalytic residue.

The protein belongs to the IUNH family. RihA subfamily.

Functionally, hydrolyzes cytidine or uridine to ribose and cytosine or uracil, respectively. In Salmonella paratyphi C (strain RKS4594), this protein is Pyrimidine-specific ribonucleoside hydrolase RihA.